Here is a 111-residue protein sequence, read N- to C-terminus: Auxin-repressed 12.5 kDa protein (111 aa).

Residues 18–111 (ERGLGMLRKV…SGETRSKHHR (94 aa)) form a disordered region. The segment covering 43–57 (TMPTTPTTPVTPTTP) has biased composition (low complexity). The segment covering 74-95 (SNLSSKTMGNQVFDSPQPNSPT) has biased composition (polar residues).

Belongs to the DRM1/ARP family.

The polypeptide is Auxin-repressed 12.5 kDa protein (Fragaria ananassa (Strawberry)).